The sequence spans 312 residues: Nucleosome assembly protein 1-like 4 (312 aa).

The stretch at 24-78 (VETLKNKLQALAEQHVDVLESLAPSVRKRVDVLMEIQSQHDELEVKFFEEKAALE) forms a coiled coil. The Nuclear export signal motif lies at 45–60 (LAPSVRKRVDVLMEIQ). The tract at residues 289 to 312 (DYGASWVDDEEEDDNNDEYSDEEA) is disordered.

It belongs to the nucleosome assembly protein (NAP) family.

The protein localises to the nucleus. The protein resides in the cytoplasm. May modulate chromatin structure by regulation of nucleosome assembly/disassembly. The protein is Nucleosome assembly protein 1-like 4 of Oryza sativa subsp. japonica (Rice).